We begin with the raw amino-acid sequence, 193 residues long: Potassium-transporting ATPase KdpC subunit (193 aa).

The helical transmembrane segment at 11-31 (FTLVFMVLLGLVYPFVMTGIA) threads the bilayer.

It belongs to the KdpC family. The system is composed of three essential subunits: KdpA, KdpB and KdpC.

The protein localises to the cell membrane. Its function is as follows. Part of the high-affinity ATP-driven potassium transport (or Kdp) system, which catalyzes the hydrolysis of ATP coupled with the electrogenic transport of potassium into the cytoplasm. This subunit acts as a catalytic chaperone that increases the ATP-binding affinity of the ATP-hydrolyzing subunit KdpB by the formation of a transient KdpB/KdpC/ATP ternary complex. This is Potassium-transporting ATPase KdpC subunit from Caldanaerobacter subterraneus subsp. tengcongensis (strain DSM 15242 / JCM 11007 / NBRC 100824 / MB4) (Thermoanaerobacter tengcongensis).